A 33-amino-acid chain; its full sequence is Gaegurin-1 (33 aa).

Cysteines 27 and 33 form a disulfide.

It belongs to the frog skin active peptide (FSAP) family. Brevinin subfamily. In terms of assembly, monomer. Expressed by the skin glands.

The protein localises to the secreted. Functionally, has a non-hemolytic activity. Has a broad spectrum of activity against both Gram-positive and Gram-negative bacteria, fungi and protozoa. This is Gaegurin-1 (GGN1) from Glandirana rugosa (Japanese wrinkled frog).